Consider the following 458-residue polypeptide: tRNA modification GTPase MnmE (458 aa).

(6S)-5-formyl-5,6,7,8-tetrahydrofolate contacts are provided by arginine 22, glutamate 84, and arginine 123. One can recognise a TrmE-type G domain in the interval 220–379; sequence GIATAIIGRP…LEKAIADLFF (160 aa). Asparagine 230 is a binding site for K(+). GTP is bound by residues 230–235, 249–255, and 274–277; these read NVGKSS, TDIAGTT, and DTAG. Serine 234 is a binding site for Mg(2+). Residues threonine 249, isoleucine 251, and threonine 254 each contribute to the K(+) site. Threonine 255 serves as a coordination point for Mg(2+). Residue lysine 458 participates in (6S)-5-formyl-5,6,7,8-tetrahydrofolate binding.

It belongs to the TRAFAC class TrmE-Era-EngA-EngB-Septin-like GTPase superfamily. TrmE GTPase family. In terms of assembly, homodimer. Heterotetramer of two MnmE and two MnmG subunits. The cofactor is K(+).

The protein resides in the cytoplasm. Its function is as follows. Exhibits a very high intrinsic GTPase hydrolysis rate. Involved in the addition of a carboxymethylaminomethyl (cmnm) group at the wobble position (U34) of certain tRNAs, forming tRNA-cmnm(5)s(2)U34. The polypeptide is tRNA modification GTPase MnmE (Bacillus cereus (strain ZK / E33L)).